Here is a 237-residue protein sequence, read N- to C-terminus: Probable transcriptional regulatory protein Fjoh_2560 (237 aa).

The protein belongs to the TACO1 family.

The protein localises to the cytoplasm. This chain is Probable transcriptional regulatory protein Fjoh_2560, found in Flavobacterium johnsoniae (strain ATCC 17061 / DSM 2064 / JCM 8514 / BCRC 14874 / CCUG 350202 / NBRC 14942 / NCIMB 11054 / UW101) (Cytophaga johnsonae).